Here is a 151-residue protein sequence, read N- to C-terminus: 1,4-dihydroxy-2-naphthoyl-CoA hydrolase (151 aa).

The active site involves D23.

The protein belongs to the 4-hydroxybenzoyl-CoA thioesterase family. DHNA-CoA hydrolase subfamily.

It catalyses the reaction 1,4-dihydroxy-2-naphthoyl-CoA + H2O = 1,4-dihydroxy-2-naphthoate + CoA + H(+). It participates in cofactor biosynthesis; phylloquinone biosynthesis. The protein operates within quinol/quinone metabolism; 1,4-dihydroxy-2-naphthoate biosynthesis; 1,4-dihydroxy-2-naphthoate from chorismate: step 7/7. Its function is as follows. Catalyzes the hydrolysis of 1,4-dihydroxy-2-naphthoyl-CoA (DHNA-CoA) to 1,4-dihydroxy-2-naphthoate (DHNA), a reaction involved in phylloquinone (vitamin K1) biosynthesis. In Prochlorococcus marinus (strain MIT 9211), this protein is 1,4-dihydroxy-2-naphthoyl-CoA hydrolase.